We begin with the raw amino-acid sequence, 229 residues long: Cytochrome c oxidase subunit 2 (229 aa).

At 1 to 26 (MSTWANLGLQDSASPLMEQLIFFHDH) the chain is on the mitochondrial intermembrane side. A helical membrane pass occupies residues 27–48 (ALLILVMITVLVGYLMVMLFFN). Topologically, residues 49–62 (SYVNRFLLHGQLIE) are mitochondrial matrix. The helical transmembrane segment at 63–82 (MIWTILPAIILLFIAMPSLR) threads the bilayer. Residues 83–229 (LLYLLDEINE…IKWISDKVNS (147 aa)) lie on the Mitochondrial intermembrane side of the membrane. Positions 161, 196, 198, 200, 204, and 207 each coordinate Cu cation. Residue Glu198 coordinates Mg(2+).

Belongs to the cytochrome c oxidase subunit 2 family. In terms of assembly, component of the cytochrome c oxidase (complex IV, CIV), a multisubunit enzyme composed of a catalytic core of 3 subunits and several supernumerary subunits. The complex exists as a monomer or a dimer and forms supercomplexes (SCs) in the inner mitochondrial membrane with ubiquinol-cytochrome c oxidoreductase (cytochrome b-c1 complex, complex III, CIII). Cu cation is required as a cofactor.

It localises to the mitochondrion inner membrane. It catalyses the reaction 4 Fe(II)-[cytochrome c] + O2 + 8 H(+)(in) = 4 Fe(III)-[cytochrome c] + 2 H2O + 4 H(+)(out). Functionally, component of the cytochrome c oxidase, the last enzyme in the mitochondrial electron transport chain which drives oxidative phosphorylation. The respiratory chain contains 3 multisubunit complexes succinate dehydrogenase (complex II, CII), ubiquinol-cytochrome c oxidoreductase (cytochrome b-c1 complex, complex III, CIII) and cytochrome c oxidase (complex IV, CIV), that cooperate to transfer electrons derived from NADH and succinate to molecular oxygen, creating an electrochemical gradient over the inner membrane that drives transmembrane transport and the ATP synthase. Cytochrome c oxidase is the component of the respiratory chain that catalyzes the reduction of oxygen to water. Electrons originating from reduced cytochrome c in the intermembrane space (IMS) are transferred via the dinuclear copper A center (CU(A)) of subunit 2 and heme A of subunit 1 to the active site in subunit 1, a binuclear center (BNC) formed by heme A3 and copper B (CU(B)). The BNC reduces molecular oxygen to 2 water molecules using 4 electrons from cytochrome c in the IMS and 4 protons from the mitochondrial matrix. The sequence is that of Cytochrome c oxidase subunit 2 (mt:CoII) from Drosophila subobscura (Fruit fly).